The chain runs to 32 residues: Cytochrome c3, 10 kDa (32 aa).

4 residues coordinate heme: His-16, Cys-25, Cys-28, and His-29.

In terms of assembly, monomer. Binds 1 heme group per subunit.

The protein resides in the periplasm. Its function is as follows. Participates in sulfate respiration coupled with phosphorylation by transferring electrons from the enzyme dehydrogenase to ferredoxin. In Desulfuromonas acetoxidans (Chloropseudomonas ethylica), this protein is Cytochrome c3, 10 kDa.